The following is a 159-amino-acid chain: Betainyl-CoA thioesterase (159 aa).

Belongs to the betainyl-CoA thioesterase family.

It catalyses the reaction N,N,N-trimethylglycyl-CoA + H2O = glycine betaine + CoA + H(+). The protein operates within amine and polyamine metabolism; carnitine metabolism. In terms of biological role, catalyzes the cleavage of betainyl-CoA (N,N,N-trimethylglycyl-CoA) into glycine betaine and coenzyme A. Is involved in a L-carnitine degradation pathway that allows P.aeruginosa to grow on L-carnitine as the sole source of carbon and nitrogen. The polypeptide is Betainyl-CoA thioesterase (Pseudomonas aeruginosa (strain ATCC 15692 / DSM 22644 / CIP 104116 / JCM 14847 / LMG 12228 / 1C / PRS 101 / PAO1)).